Reading from the N-terminus, the 190-residue chain is ATP synthase subunit b (190 aa).

Residues Ile4–Ala24 form a helical membrane-spanning segment.

The protein belongs to the ATPase B chain family. In terms of assembly, F-type ATPases have 2 components, F(1) - the catalytic core - and F(0) - the membrane proton channel. F(1) has five subunits: alpha(3), beta(3), gamma(1), delta(1), epsilon(1). F(0) has three main subunits: a(1), b(2) and c(10-14). The alpha and beta chains form an alternating ring which encloses part of the gamma chain. F(1) is attached to F(0) by a central stalk formed by the gamma and epsilon chains, while a peripheral stalk is formed by the delta and b chains.

The protein localises to the cell inner membrane. Its function is as follows. F(1)F(0) ATP synthase produces ATP from ADP in the presence of a proton or sodium gradient. F-type ATPases consist of two structural domains, F(1) containing the extramembraneous catalytic core and F(0) containing the membrane proton channel, linked together by a central stalk and a peripheral stalk. During catalysis, ATP synthesis in the catalytic domain of F(1) is coupled via a rotary mechanism of the central stalk subunits to proton translocation. Functionally, component of the F(0) channel, it forms part of the peripheral stalk, linking F(1) to F(0). The polypeptide is ATP synthase subunit b (Ruegeria pomeroyi (strain ATCC 700808 / DSM 15171 / DSS-3) (Silicibacter pomeroyi)).